The chain runs to 527 residues: Anthranilate synthase component 1 1 (527 aa).

Ser-52 contacts L-tryptophan. Residues 53–72 (AEKTPASDPDGAFTPDTTTE) form a disordered region. Position 298-300 (298-300 (PYM)) interacts with L-tryptophan. Residue 333–334 (GT) participates in chorismate binding. Glu-360 provides a ligand contact to Mg(2+). Residues Tyr-448, Arg-468, 486 to 488 (GAG), and Gly-488 each bind chorismate. Glu-501 is a Mg(2+) binding site.

It belongs to the anthranilate synthase component I family. As to quaternary structure, tetramer of two components I and two components II. It depends on Mg(2+) as a cofactor.

The enzyme catalyses chorismate + L-glutamine = anthranilate + pyruvate + L-glutamate + H(+). Its pathway is amino-acid biosynthesis; L-tryptophan biosynthesis; L-tryptophan from chorismate: step 1/5. This chain is Anthranilate synthase component 1 1 (trpE1), found in Halobacterium salinarum (strain ATCC 700922 / JCM 11081 / NRC-1) (Halobacterium halobium).